We begin with the raw amino-acid sequence, 229 residues long: Orotidine 5'-phosphate decarboxylase (229 aa).

Substrate is bound by residues Asp11, Lys33, 61-70 (DMKLFDISAT), Thr116, Arg179, Gln188, Gly208, and Arg209. Lys63 acts as the Proton donor in catalysis.

The protein belongs to the OMP decarboxylase family. Type 1 subfamily. Homodimer.

It carries out the reaction orotidine 5'-phosphate + H(+) = UMP + CO2. Its pathway is pyrimidine metabolism; UMP biosynthesis via de novo pathway; UMP from orotate: step 2/2. In terms of biological role, catalyzes the decarboxylation of orotidine 5'-monophosphate (OMP) to uridine 5'-monophosphate (UMP). This is Orotidine 5'-phosphate decarboxylase from Jannaschia sp. (strain CCS1).